Consider the following 336-residue polypeptide: Ribose-phosphate pyrophosphokinase (336 aa).

ATP contacts are provided by residues 43 to 45 (DQE) and 102 to 103 (RQ). Residues histidine 136 and aspartate 178 each coordinate Mg(2+). Lysine 201 is an active-site residue. D-ribose 5-phosphate-binding positions include arginine 203, aspartate 227, and 231–235 (DTAGT).

This sequence belongs to the ribose-phosphate pyrophosphokinase family. Class I subfamily. In terms of assembly, homohexamer. The cofactor is Mg(2+).

The protein resides in the cytoplasm. The enzyme catalyses D-ribose 5-phosphate + ATP = 5-phospho-alpha-D-ribose 1-diphosphate + AMP + H(+). Its pathway is metabolic intermediate biosynthesis; 5-phospho-alpha-D-ribose 1-diphosphate biosynthesis; 5-phospho-alpha-D-ribose 1-diphosphate from D-ribose 5-phosphate (route I): step 1/1. Involved in the biosynthesis of the central metabolite phospho-alpha-D-ribosyl-1-pyrophosphate (PRPP) via the transfer of pyrophosphoryl group from ATP to 1-hydroxyl of ribose-5-phosphate (Rib-5-P). The sequence is that of Ribose-phosphate pyrophosphokinase from Cereibacter sphaeroides (strain KD131 / KCTC 12085) (Rhodobacter sphaeroides).